Consider the following 434-residue polypeptide: Eukaryotic translation initiation factor 3 subunit E (434 aa).

Residues 219-392 (FFNHPKGRDL…GHVVMGTQPL (174 aa)) enclose the PCI domain.

The protein belongs to the eIF-3 subunit E family. In terms of assembly, component of the eukaryotic translation initiation factor 3 (eIF-3) complex. The eIF-3 complex interacts with pix. Interacts with mxt.

Its subcellular location is the cytoplasm. Functionally, component of the eukaryotic translation initiation factor 3 (eIF-3) complex, which is involved in protein synthesis of a specialized repertoire of mRNAs and, together with other initiation factors, stimulates binding of mRNA and methionyl-tRNAi to the 40S ribosome. The eIF-3 complex specifically targets and initiates translation of a subset of mRNAs involved in cell proliferation. The polypeptide is Eukaryotic translation initiation factor 3 subunit E (eIF3-S6) (Drosophila pseudoobscura pseudoobscura (Fruit fly)).